The chain runs to 778 residues: LPS-assembly protein LptD (778 aa).

An N-terminal signal peptide occupies residues 1–23 (MKTRYSVLSVAMTAAFYTQYAQA).

Belongs to the LptD family. As to quaternary structure, component of the lipopolysaccharide transport and assembly complex. Interacts with LptE and LptA.

It localises to the cell outer membrane. Together with LptE, is involved in the assembly of lipopolysaccharide (LPS) at the surface of the outer membrane. This chain is LPS-assembly protein LptD, found in Actinobacillus pleuropneumoniae serotype 5b (strain L20).